The sequence spans 360 residues: DNA polymerase IV (360 aa).

The UmuC domain maps to 9–191; that stretch reads IMHLDIDAFY…LNINKIPYIG (183 aa). Residues Asp13 and Asp108 each contribute to the Mg(2+) site. The active site involves Glu109.

Belongs to the DNA polymerase type-Y family. Monomer. Mg(2+) serves as cofactor.

It localises to the cytoplasm. It catalyses the reaction DNA(n) + a 2'-deoxyribonucleoside 5'-triphosphate = DNA(n+1) + diphosphate. Functionally, poorly processive, error-prone DNA polymerase involved in untargeted mutagenesis. Copies undamaged DNA at stalled replication forks, which arise in vivo from mismatched or misaligned primer ends. These misaligned primers can be extended by PolIV. Exhibits no 3'-5' exonuclease (proofreading) activity. May be involved in translesional synthesis, in conjunction with the beta clamp from PolIII. The polypeptide is DNA polymerase IV (Ureaplasma parvum serovar 3 (strain ATCC 27815 / 27 / NCTC 11736)).